Consider the following 200-residue polypeptide: Imidazoleglycerol-phosphate dehydratase (200 aa).

Belongs to the imidazoleglycerol-phosphate dehydratase family.

The protein localises to the cytoplasm. It carries out the reaction D-erythro-1-(imidazol-4-yl)glycerol 3-phosphate = 3-(imidazol-4-yl)-2-oxopropyl phosphate + H2O. It functions in the pathway amino-acid biosynthesis; L-histidine biosynthesis; L-histidine from 5-phospho-alpha-D-ribose 1-diphosphate: step 6/9. In Chlorobium limicola (strain DSM 245 / NBRC 103803 / 6330), this protein is Imidazoleglycerol-phosphate dehydratase.